The following is a 315-amino-acid chain: 4-hydroxy-3-methylbut-2-enyl diphosphate reductase (315 aa).

Position 12 (C12) interacts with [4Fe-4S] cluster. H41 and H74 together coordinate (2E)-4-hydroxy-3-methylbut-2-enyl diphosphate. Positions 41 and 74 each coordinate dimethylallyl diphosphate. Isopentenyl diphosphate contacts are provided by H41 and H74. C96 contacts [4Fe-4S] cluster. H124 is a (2E)-4-hydroxy-3-methylbut-2-enyl diphosphate binding site. H124 serves as a coordination point for dimethylallyl diphosphate. Position 124 (H124) interacts with isopentenyl diphosphate. Catalysis depends on E126, which acts as the Proton donor. A (2E)-4-hydroxy-3-methylbut-2-enyl diphosphate-binding site is contributed by T168. C198 serves as a coordination point for [4Fe-4S] cluster. (2E)-4-hydroxy-3-methylbut-2-enyl diphosphate is bound by residues S226, S227, N228, and S270. The dimethylallyl diphosphate site is built by S226, S227, N228, and S270. Isopentenyl diphosphate is bound by residues S226, S227, N228, and S270.

Belongs to the IspH family. [4Fe-4S] cluster serves as cofactor.

It carries out the reaction isopentenyl diphosphate + 2 oxidized [2Fe-2S]-[ferredoxin] + H2O = (2E)-4-hydroxy-3-methylbut-2-enyl diphosphate + 2 reduced [2Fe-2S]-[ferredoxin] + 2 H(+). The catalysed reaction is dimethylallyl diphosphate + 2 oxidized [2Fe-2S]-[ferredoxin] + H2O = (2E)-4-hydroxy-3-methylbut-2-enyl diphosphate + 2 reduced [2Fe-2S]-[ferredoxin] + 2 H(+). It participates in isoprenoid biosynthesis; dimethylallyl diphosphate biosynthesis; dimethylallyl diphosphate from (2E)-4-hydroxy-3-methylbutenyl diphosphate: step 1/1. It functions in the pathway isoprenoid biosynthesis; isopentenyl diphosphate biosynthesis via DXP pathway; isopentenyl diphosphate from 1-deoxy-D-xylulose 5-phosphate: step 6/6. Catalyzes the conversion of 1-hydroxy-2-methyl-2-(E)-butenyl 4-diphosphate (HMBPP) into a mixture of isopentenyl diphosphate (IPP) and dimethylallyl diphosphate (DMAPP). Acts in the terminal step of the DOXP/MEP pathway for isoprenoid precursor biosynthesis. The sequence is that of 4-hydroxy-3-methylbut-2-enyl diphosphate reductase from Pseudomonas entomophila (strain L48).